Here is a 950-residue protein sequence, read N- to C-terminus: Glycine dehydrogenase (decarboxylating) (950 aa).

Lys698 is subject to N6-(pyridoxal phosphate)lysine.

Belongs to the GcvP family. In terms of assembly, the glycine cleavage system is composed of four proteins: P, T, L and H. The cofactor is pyridoxal 5'-phosphate.

It catalyses the reaction N(6)-[(R)-lipoyl]-L-lysyl-[glycine-cleavage complex H protein] + glycine + H(+) = N(6)-[(R)-S(8)-aminomethyldihydrolipoyl]-L-lysyl-[glycine-cleavage complex H protein] + CO2. Functionally, the glycine cleavage system catalyzes the degradation of glycine. The P protein binds the alpha-amino group of glycine through its pyridoxal phosphate cofactor; CO(2) is released and the remaining methylamine moiety is then transferred to the lipoamide cofactor of the H protein. The protein is Glycine dehydrogenase (decarboxylating) of Neisseria meningitidis serogroup C / serotype 2a (strain ATCC 700532 / DSM 15464 / FAM18).